The primary structure comprises 486 residues: Cysteine--tRNA ligase (486 aa).

Position 29 (Cys29) interacts with Zn(2+). The 'HIGH' region motif lies at Ile31–His41. Positions 215, 240, and 244 each coordinate Zn(2+). The 'KMSKS' region motif lies at Lys272–Ser276. Lys275 serves as a coordination point for ATP.

Belongs to the class-I aminoacyl-tRNA synthetase family. Monomer. Zn(2+) is required as a cofactor.

The protein localises to the cytoplasm. It catalyses the reaction tRNA(Cys) + L-cysteine + ATP = L-cysteinyl-tRNA(Cys) + AMP + diphosphate. The protein is Cysteine--tRNA ligase of Gloeothece citriformis (strain PCC 7424) (Cyanothece sp. (strain PCC 7424)).